A 496-amino-acid chain; its full sequence is UDP-glycosyltransferase 73C4 (496 aa).

UDP-alpha-D-glucose-binding positions include S297, 357-359, 374-382, and 396-399; these read SPQ, HCGWNSTLE, and FGDQ. A disordered region spans residues 450-475; the sequence is SDDAKERRRRVKELGESAHKAVEEGG. Residues 451–472 are compositionally biased toward basic and acidic residues; that stretch reads DDAKERRRRVKELGESAHKAVE.

Belongs to the UDP-glycosyltransferase family.

This chain is UDP-glycosyltransferase 73C4 (UGT73C4), found in Arabidopsis thaliana (Mouse-ear cress).